A 432-amino-acid chain; its full sequence is UDP-glucosyltransferase B1 (432 aa).

Belongs to the UDP-glycosyltransferase family.

It carries out the reaction (9Z)-17-hydroxyoctadec-9-enoate 17-O-beta-D-glucoside + UDP-alpha-D-glucose = (9Z)-17-hydroxyoctadec-9-enoate 17-O-sophoroside + UDP + H(+). Functionally, catalyzes the second glycosylation step of sophorolipid biosynthesis, the further glucosylation of the previoulsy formed glucolipid to give rise to an acidic sophorolipid. In Starmerella bombicola (Yeast), this protein is UDP-glucosyltransferase B1.